The sequence spans 317 residues: Ribonuclease Z (317 aa).

Histidine 61, histidine 63, aspartate 65, histidine 66, histidine 139, aspartate 210, and histidine 268 together coordinate Zn(2+). Aspartate 65 (proton acceptor) is an active-site residue.

The protein belongs to the RNase Z family. Homodimer. Zn(2+) serves as cofactor.

The enzyme catalyses Endonucleolytic cleavage of RNA, removing extra 3' nucleotides from tRNA precursor, generating 3' termini of tRNAs. A 3'-hydroxy group is left at the tRNA terminus and a 5'-phosphoryl group is left at the trailer molecule.. Inhibited by high salt concentrations. In terms of biological role, zinc phosphodiesterase, which displays some tRNA 3'-processing endonuclease activity. Probably involved in tRNA maturation, by removing a 3'-trailer from precursor tRNA. Can also catalyze the 5' end cleavage of the 5S rRNA. In Haloferax volcanii (strain ATCC 29605 / DSM 3757 / JCM 8879 / NBRC 14742 / NCIMB 2012 / VKM B-1768 / DS2) (Halobacterium volcanii), this protein is Ribonuclease Z.